Consider the following 647-residue polypeptide: Type II methyltransferase M.FokI (647 aa).

Short sequence motifs (adenine-specific methylase) lie at residues 218–221 and 548–551; these read DPPY.

This sequence belongs to the N(4)/N(6)-methyltransferase family. Monomer.

The catalysed reaction is a 2'-deoxyadenosine in DNA + S-adenosyl-L-methionine = an N(6)-methyl-2'-deoxyadenosine in DNA + S-adenosyl-L-homocysteine + H(+). An alpha subtype methylase that recognizes the asymmetric double-stranded sequence 5'-GGATG-3', methylates A-3 of both strands, and protects the DNA from cleavage by the FokI endonuclease. This is Type II methyltransferase M.FokI from Planomicrobium okeanokoites (Planococcus okeanokoites).